The following is a 487-amino-acid chain: MMHDALFERFSARLKAQVGPEVYASWFARLKLHTVSKSVVRFTVPTTFLKSWINNRYMDLITSLVQSEDPDVLKVEILVRSASRPVRPAQTEERAQPVQEVGAAPRNKSFIPSQSATAPAAQPMAAQATLRQGGSGPLFGSPLDTRFTFDTFVEGSSNRVALAAAKTIAEAGAGAVRFNPLFIHAGVGLGKTHLLQAIANAAIDSPRNPRVVYLTAEYFMWRFATAIRDNDALTLKDTLRNIDLLVIDDMQFLQGKMIQHEFCHLLNMLLDSAKQVVVAADRAPWELESLDPRVRSRLQGGMAIEIEGPDYDMRYEMLNRRMGSARQDDPSFEISDEILTHVAKSVTASGRELEGAFNQLMFRRSFEPNLSVDRVDELLSHLVGSGEAKRVRIEDIQRIVARHYNVSRQELVSNRRTRVIVKPRQIAMYLAKMLTPRSFPEIGRRFGGRDHTTVLHAVRKIEDLISGDTKLGHEVELLKRLINENNA.

A domain I, interacts with DnaA modulators region spans residues 1-71 (MMHDALFERF…TSLVQSEDPD (71 aa)). The domain II stretch occupies residues 71–141 (DVLKVEILVR…QGGSGPLFGS (71 aa)). The domain III, AAA+ region stretch occupies residues 142–364 (PLDTRFTFDT…GAFNQLMFRR (223 aa)). ATP-binding residues include G188, G190, K191, and T192. A domain IV, binds dsDNA region spans residues 365-487 (SFEPNLSVDR…LKRLINENNA (123 aa)).

This sequence belongs to the DnaA family. Oligomerizes as a right-handed, spiral filament on DNA at oriC.

Its subcellular location is the cytoplasm. Its function is as follows. Plays an essential role in the initiation and regulation of chromosomal replication. ATP-DnaA binds to the origin of replication (oriC) to initiate formation of the DNA replication initiation complex once per cell cycle. Binds the DnaA box (a 9 base pair repeat at the origin) and separates the double-stranded (ds)DNA. Forms a right-handed helical filament on oriC DNA; dsDNA binds to the exterior of the filament while single-stranded (ss)DNA is stabiized in the filament's interior. The ATP-DnaA-oriC complex binds and stabilizes one strand of the AT-rich DNA unwinding element (DUE), permitting loading of DNA polymerase. After initiation quickly degrades to an ADP-DnaA complex that is not apt for DNA replication. Binds acidic phospholipids. This Agrobacterium fabrum (strain C58 / ATCC 33970) (Agrobacterium tumefaciens (strain C58)) protein is Chromosomal replication initiator protein DnaA.